A 134-amino-acid chain; its full sequence is Holo-[acyl-carrier-protein] synthase (134 aa).

Residues D8 and E57 each coordinate Mg(2+).

This sequence belongs to the P-Pant transferase superfamily. AcpS family. Mg(2+) is required as a cofactor.

Its subcellular location is the cytoplasm. The catalysed reaction is apo-[ACP] + CoA = holo-[ACP] + adenosine 3',5'-bisphosphate + H(+). Its function is as follows. Transfers the 4'-phosphopantetheine moiety from coenzyme A to a Ser of acyl-carrier-protein. The polypeptide is Holo-[acyl-carrier-protein] synthase (Rhizobium johnstonii (strain DSM 114642 / LMG 32736 / 3841) (Rhizobium leguminosarum bv. viciae)).